Here is a 439-residue protein sequence, read N- to C-terminus: Amino-acid acetyltransferase (439 aa).

Residues 289–429 (EDIRIATVQD…DHYNYQRRSK (141 aa)) enclose the N-acetyltransferase domain.

The protein belongs to the acetyltransferase family. ArgA subfamily.

Its subcellular location is the cytoplasm. It catalyses the reaction L-glutamate + acetyl-CoA = N-acetyl-L-glutamate + CoA + H(+). The protein operates within amino-acid biosynthesis; L-arginine biosynthesis; N(2)-acetyl-L-ornithine from L-glutamate: step 1/4. In Mannheimia succiniciproducens (strain KCTC 0769BP / MBEL55E), this protein is Amino-acid acetyltransferase.